A 493-amino-acid polypeptide reads, in one-letter code: Protein dml1 (493 aa).

The protein belongs to the misato family.

The protein resides in the mitochondrion. In terms of biological role, involved in the partitioning of the mitochondrial organelle and mitochondrial DNA (mtDNA) inheritance. This is Protein dml1 (dml1) from Aspergillus oryzae (strain ATCC 42149 / RIB 40) (Yellow koji mold).